The chain runs to 526 residues: Peptide chain release factor 3 (526 aa).

Residues 8–277 enclose the tr-type G domain; sequence DKRRTFAIIS…GLTQWAPKPQ (270 aa). Residues 17-24, 85-89, and 139-142 contribute to the GTP site; these read SHPDAGKT, DTPGH, and NKLD.

It belongs to the TRAFAC class translation factor GTPase superfamily. Classic translation factor GTPase family. PrfC subfamily.

It is found in the cytoplasm. Its function is as follows. Increases the formation of ribosomal termination complexes and stimulates activities of RF-1 and RF-2. It binds guanine nucleotides and has strong preference for UGA stop codons. It may interact directly with the ribosome. The stimulation of RF-1 and RF-2 is significantly reduced by GTP and GDP, but not by GMP. This chain is Peptide chain release factor 3, found in Actinobacillus succinogenes (strain ATCC 55618 / DSM 22257 / CCUG 43843 / 130Z).